A 287-amino-acid chain; its full sequence is Nematocyst expressed protein 6 (287 aa).

The N-terminal stretch at 1–20 (MKGFIFAGVLVSALICLAEG) is a signal peptide. The region spanning 53 to 249 (RAALRDRYLW…RQTNLMYKCN (197 aa)) is the Peptidase M12A domain. Intrachain disulfides connect Cys-95/Cys-248 and Cys-116/Cys-139. His-146 contributes to the Zn(2+) binding site. Glu-147 is a catalytic residue. The Zn(2+) site is built by His-150 and His-156. The tract at residues 249–287 (NAQGDSELQPVNDEDEDKDGGDSKKKPDPKGPKPGEIEE) is disordered. Over residues 268 to 287 (GGDSKKKPDPKGPKPGEIEE) the composition is skewed to basic and acidic residues.

The cofactor is Zn(2+). In terms of tissue distribution, nematocyte and pharyngeal gland.

It is found in the secreted. It localises to the nematocyst. Metalloprotease. The protein is Nematocyst expressed protein 6 of Nematostella vectensis (Starlet sea anemone).